Reading from the N-terminus, the 142-residue chain is Protein KNATM (142 aa).

Positions 4–36 (KKDENSILENMKQEINHSLKEEAQEEEEILKKR) form a coiled coil.

As to quaternary structure, interacts with KNAT1, KNAT3, KNAT4, BEL1, BLH2, BLH4 and BLH9, but not with BLH8 or the KNATM-A and KNATM-C isoforms. Isoforms KNATM-A and KNATM-C: no interactions with KNATM-B, KNOXX or BELL proteins. Detected in inflorescences, seedlings, leaves, hydathodes, stems, roots, embryo and siliques. Expressed in a polar pattern in organ primordia and at the boundary of mature organs. Detected in the lateral domains of flower meristems, but not in the inflorescence meristem or the vegetative shoot apical meristem.

Its subcellular location is the cytoplasm. The protein resides in the nucleus. Its function is as follows. Transcriptional regulator involved in leaf proximal/distal patterning. May act by sequestering BELL transcription factors. This is Protein KNATM from Arabidopsis thaliana (Mouse-ear cress).